The primary structure comprises 137 residues: ATP synthase epsilon chain (137 aa).

The protein belongs to the ATPase epsilon chain family. F-type ATPases have 2 components, CF(1) - the catalytic core - and CF(0) - the membrane proton channel. CF(1) has five subunits: alpha(3), beta(3), gamma(1), delta(1), epsilon(1). CF(0) has three main subunits: a, b and c.

The protein localises to the cell membrane. Produces ATP from ADP in the presence of a proton gradient across the membrane. In Streptococcus agalactiae serotype Ia (strain ATCC 27591 / A909 / CDC SS700), this protein is ATP synthase epsilon chain.